Consider the following 417-residue polypeptide: Hydrogen cyanide synthase subunit HcnC (417 aa).

A signal peptide spans 1-18; sequence MIKHYDVVIAGGGVIGAS. FAD is bound at residue 7–21; it reads VVIAGGGVIGASCAY. A lipid anchor (N-palmitoyl cysteine) is attached at Cys19. Cys19 carries the S-diacylglycerol cysteine lipid modification. Residues 46 to 66 traverse the membrane as a helical segment; the sequence is SAGGLWAIGESVGLGCGVIFF.

Belongs to the FAD-dependent glycerol-3-phosphate dehydrogenase family. Heterotrimer of HcnA, HcnB and HcnC.

It localises to the cell membrane. The catalysed reaction is glycine + 2 A = hydrogen cyanide + 2 AH2 + CO2. Its function is as follows. A three-component membrane-bound flavoenzyme that catalyzes the formation of hydrogen cyanide, a secondary metabolite, by transfer of electrons to a cyanide-resistant branch of the aerobic respiratory chain. Contributes to suppression of black root rot of tobacco. This chain is Hydrogen cyanide synthase subunit HcnC, found in Pseudomonas protegens (strain DSM 19095 / LMG 27888 / CFBP 6595 / CHA0).